A 393-amino-acid polypeptide reads, in one-letter code: Serine/threonine-protein phosphatase 2A activator 1 (393 aa).

The interval 328 to 393 (EKEEESIEQA…TSFSRDRLRR (66 aa)) is disordered. Polar residues-rich tracts occupy residues 335–356 (EQAN…TSTS) and 365–386 (SGNN…QTSF). Ser-341 is subject to Phosphoserine.

It belongs to the PTPA-type PPIase family. As to quaternary structure, interacts with the phosphatase PP2A-like catalytic subunits PPG1, PPH3 and SIT4. Forms a ternary complex with SIT4-TAP42.

It localises to the cytoplasm. Its subcellular location is the nucleus. The enzyme catalyses [protein]-peptidylproline (omega=180) = [protein]-peptidylproline (omega=0). In terms of biological role, PPIases accelerate the folding of proteins. It catalyzes the cis-trans isomerization of proline imidic peptide bonds in oligopeptides. Acts as a regulatory subunit for TAP42-associated PP2A-like phosphatases modulating their activity or substrate specificity, probably by inducing a conformational change in the catalytic subunit, a direct target of the PPIase. Can reactivate inactive phosphatase PP2A-phosphatase methylesterase complexes (PP2Ai) in presence of ATP and Mg(2+) by dissociating the inactive form from the complex. Involved in the regulation of cell cycle progression, mitotic spindle formation, bud morphogenesis and DNA repair. This chain is Serine/threonine-protein phosphatase 2A activator 1 (RRD1), found in Saccharomyces cerevisiae (strain ATCC 204508 / S288c) (Baker's yeast).